A 178-amino-acid polypeptide reads, in one-letter code: MSRVGKAPVAVPSGVTININGQSVEVKGPKGTLSQDIPAPITVAQEGEELVVSRPDDHRKNRSLHGLSRSLVFNMIEGVTKGYTINMEIFGVGYRVQLKGKNLEFALGYSHPVLIEAPEGITFAVDGNTKFSIAGIDKQQVGQIAANIRRLRKDDPYKGKGIRYEGEQVRRKVGKTGK.

This sequence belongs to the universal ribosomal protein uL6 family. As to quaternary structure, part of the 50S ribosomal subunit.

In terms of biological role, this protein binds to the 23S rRNA, and is important in its secondary structure. It is located near the subunit interface in the base of the L7/L12 stalk, and near the tRNA binding site of the peptidyltransferase center. The polypeptide is Large ribosomal subunit protein uL6 (Corynebacterium jeikeium (strain K411)).